The following is a 111-amino-acid chain: Cytochrome c6 (111 aa).

Residues 1-25 form the signal peptide; sequence MKKIFSLVLLGIALFTFAFSSPALA. The heme c site is built by C39, C42, H43, and M83.

Belongs to the cytochrome c family. PetJ subfamily. Monomer. Binds 1 heme c group covalently per subunit.

Its subcellular location is the cellular thylakoid lumen. Functions as an electron carrier between membrane-bound cytochrome b6-f and photosystem I in oxygenic photosynthesis. This Nostoc sp. (strain PCC 7120 / SAG 25.82 / UTEX 2576) protein is Cytochrome c6 (petJ).